The sequence spans 461 residues: tRNA modification GTPase MnmE (461 aa).

Residues Arg23, Glu84, and Arg123 each coordinate (6S)-5-formyl-5,6,7,8-tetrahydrofolate. Residues 216–383 (GARAALIGRP…LGATVARLLL (168 aa)) enclose the TrmE-type G domain. Residue Asn226 coordinates K(+). Residues 226 to 231 (NAGKSS), 245 to 251 (TPIPGTT), and 270 to 273 (DTAG) each bind GTP. A Mg(2+)-binding site is contributed by Ser230. Residues Thr245, Ile247, and Thr250 each contribute to the K(+) site. Residue Thr251 participates in Mg(2+) binding. Residue Lys461 participates in (6S)-5-formyl-5,6,7,8-tetrahydrofolate binding.

Belongs to the TRAFAC class TrmE-Era-EngA-EngB-Septin-like GTPase superfamily. TrmE GTPase family. As to quaternary structure, homodimer. Heterotetramer of two MnmE and two MnmG subunits. Requires K(+) as cofactor.

It is found in the cytoplasm. Functionally, exhibits a very high intrinsic GTPase hydrolysis rate. Involved in the addition of a carboxymethylaminomethyl (cmnm) group at the wobble position (U34) of certain tRNAs, forming tRNA-cmnm(5)s(2)U34. The chain is tRNA modification GTPase MnmE from Roseiflexus sp. (strain RS-1).